The primary structure comprises 407 residues: Phosphopentomutase (407 aa).

Mn(2+) is bound by residues D10, D306, H311, D347, H348, and H359.

This sequence belongs to the phosphopentomutase family. It depends on Mn(2+) as a cofactor.

It is found in the cytoplasm. It carries out the reaction 2-deoxy-alpha-D-ribose 1-phosphate = 2-deoxy-D-ribose 5-phosphate. The enzyme catalyses alpha-D-ribose 1-phosphate = D-ribose 5-phosphate. The protein operates within carbohydrate degradation; 2-deoxy-D-ribose 1-phosphate degradation; D-glyceraldehyde 3-phosphate and acetaldehyde from 2-deoxy-alpha-D-ribose 1-phosphate: step 1/2. Its function is as follows. Isomerase that catalyzes the conversion of deoxy-ribose 1-phosphate (dRib-1-P) and ribose 1-phosphate (Rib-1-P) to deoxy-ribose 5-phosphate (dRib-5-P) and ribose 5-phosphate (Rib-5-P), respectively. The chain is Phosphopentomutase from Salmonella gallinarum (strain 287/91 / NCTC 13346).